The following is a 687-amino-acid chain: Translation initiation factor IF-2 (687 aa).

The tr-type G domain occupies 186–355 (KRPPIVTVMG…LLTAEMLELK (170 aa)). Positions 195–202 (GHVDHGKT) are G1. 195 to 202 (GHVDHGKT) lines the GTP pocket. A G2 region spans residues 220-224 (GITQH). A G3 region spans residues 241 to 244 (DTPG). GTP is bound by residues 241–245 (DTPGH) and 295–298 (NKID). The interval 295–298 (NKID) is G4. The segment at 331 to 333 (SAK) is G5.

The protein belongs to the TRAFAC class translation factor GTPase superfamily. Classic translation factor GTPase family. IF-2 subfamily.

It localises to the cytoplasm. One of the essential components for the initiation of protein synthesis. Protects formylmethionyl-tRNA from spontaneous hydrolysis and promotes its binding to the 30S ribosomal subunits. Also involved in the hydrolysis of GTP during the formation of the 70S ribosomal complex. This is Translation initiation factor IF-2 from Clostridium botulinum (strain Eklund 17B / Type B).